A 208-amino-acid polypeptide reads, in one-letter code: ATP-dependent Clp protease proteolytic subunit (208 aa).

Catalysis depends on Ser-98, which acts as the Nucleophile. The active site involves His-123.

The protein belongs to the peptidase S14 family. In terms of assembly, fourteen ClpP subunits assemble into 2 heptameric rings which stack back to back to give a disk-like structure with a central cavity, resembling the structure of eukaryotic proteasomes.

Its subcellular location is the cytoplasm. The enzyme catalyses Hydrolysis of proteins to small peptides in the presence of ATP and magnesium. alpha-casein is the usual test substrate. In the absence of ATP, only oligopeptides shorter than five residues are hydrolyzed (such as succinyl-Leu-Tyr-|-NHMec, and Leu-Tyr-Leu-|-Tyr-Trp, in which cleavage of the -Tyr-|-Leu- and -Tyr-|-Trp bonds also occurs).. In terms of biological role, cleaves peptides in various proteins in a process that requires ATP hydrolysis. Has a chymotrypsin-like activity. Plays a major role in the degradation of misfolded proteins. The polypeptide is ATP-dependent Clp protease proteolytic subunit (Wolbachia sp. subsp. Drosophila simulans (strain wRi)).